A 1250-amino-acid polypeptide reads, in one-letter code: Myosin-1 (1250 aa).

The tract at residues 1–43 (MGHSRRPAGGEKKSRGFGRSKAAADVGDGRQTGGKPQVKKATF) is disordered. Positions 51–730 (IGVSDLTLLS…TLFALEAMRD (680 aa)) constitute a Myosin motor domain. ATP is bound at residue 144-151 (GESGAGKT). Residue Ser372 is modified to Phosphoserine. The segment at 419 to 501 (SIGILDIYGF…PGVFAALNDA (83 aa)) is actin-binding. IQ domains follow at residues 734 to 754 (HNMAIRIQRAWRNYLRYRTEC) and 755 to 780 (AIRIQRFWRRTTGGLEFIKLRDQGHQ). The TH1 domain occupies 788 to 978 (RRRMSLLGSR…TIHTGPGEPA (191 aa)). Disordered regions lie at residues 962 to 1079 (DDSY…PKKP) and 1126 to 1250 (WTPE…DDDW). The segment covering 1021-1035 (AAQPLPRATPQPAAP) has biased composition (pro residues). Residues 1036–1051 (QPAARAVPQPVAAVAA) are compositionally biased toward low complexity. 2 stretches are compositionally biased toward pro residues: residues 1064–1077 (APPPPPPAAAPAPK) and 1139–1151 (TPKPAPPPPPPAA). The SH3 domain maps to 1076–1137 (PKKPTAKVLY…PEAYLEEQVA (62 aa)). Low complexity predominate over residues 1152 to 1170 (PRSTPAPATNGAAAAAKAK). Polar residues predominate over residues 1201–1222 (VSMNSHDSSGGSGRGTPNSMSN). Positions 1223–1232 (ASLAGGLAEA) are enriched in low complexity.

Belongs to the TRAFAC class myosin-kinesin ATPase superfamily. Myosin family. Phosphorylation of the TEDS site (Ser-372) is required for the polarization of the actin cytoskeleton. Phosphorylation probably activates the myosin-I ATPase activity.

It localises to the cytoplasm. Its subcellular location is the cytoskeleton. The protein resides in the actin patch. Functionally, type-I myosin implicated in the organization of the actin cytoskeleton. Required for proper actin cytoskeleton polarization. At the cell cortex, assembles in patch-like structures together with proteins from the actin-polymerizing machinery and promotes actin assembly. Functions as actin nucleation-promoting factor (NPF) for the Arp2/3 complex. Plays an important role in polarized growth, spore germination, hyphal morphogenesis, and septal wall formation. This is Myosin-1 (myoA) from Neosartorya fischeri (strain ATCC 1020 / DSM 3700 / CBS 544.65 / FGSC A1164 / JCM 1740 / NRRL 181 / WB 181) (Aspergillus fischerianus).